We begin with the raw amino-acid sequence, 356 residues long: UDP-N-acetylglucosamine--N-acetylmuramyl-(pentapeptide) pyrophosphoryl-undecaprenol N-acetylglucosamine transferase (356 aa).

UDP-N-acetyl-alpha-D-glucosamine is bound by residues 15–17 (TGG), asparagine 127, arginine 163, serine 191, isoleucine 244, 263–268 (ALTVSE), and glutamine 288.

This sequence belongs to the glycosyltransferase 28 family. MurG subfamily.

Its subcellular location is the cell inner membrane. It carries out the reaction di-trans,octa-cis-undecaprenyl diphospho-N-acetyl-alpha-D-muramoyl-L-alanyl-D-glutamyl-meso-2,6-diaminopimeloyl-D-alanyl-D-alanine + UDP-N-acetyl-alpha-D-glucosamine = di-trans,octa-cis-undecaprenyl diphospho-[N-acetyl-alpha-D-glucosaminyl-(1-&gt;4)]-N-acetyl-alpha-D-muramoyl-L-alanyl-D-glutamyl-meso-2,6-diaminopimeloyl-D-alanyl-D-alanine + UDP + H(+). It participates in cell wall biogenesis; peptidoglycan biosynthesis. Cell wall formation. Catalyzes the transfer of a GlcNAc subunit on undecaprenyl-pyrophosphoryl-MurNAc-pentapeptide (lipid intermediate I) to form undecaprenyl-pyrophosphoryl-MurNAc-(pentapeptide)GlcNAc (lipid intermediate II). This is UDP-N-acetylglucosamine--N-acetylmuramyl-(pentapeptide) pyrophosphoryl-undecaprenol N-acetylglucosamine transferase from Klebsiella pneumoniae (strain 342).